The following is a 435-amino-acid chain: Tumor necrosis factor receptor superfamily member 3 (435 aa).

The N-terminal stretch at 1–30 (MLLPWATSAPGLAWGPLVLGLFGLLAASQP) is a signal peptide. Over 31–227 (QAVPPYASEN…PPEMSGTMLM (197 aa)) the chain is Extracellular. N-linked (GlcNAc...) asparagine glycosylation is present at asparagine 40. 4 TNFR-Cys repeats span residues 42 to 81 (TCRDQEKEYYEPQHRICCSRCPPGTYVSAKCSRIRDTVCA), 82 to 124 (TCAE…KTQC), 125 to 168 (RCQP…NHCV), and 169 to 211 (PCKA…TTCK). Intrachain disulfides connect cysteine 43/cysteine 58, cysteine 59/cysteine 72, cysteine 62/cysteine 80, cysteine 83/cysteine 98, cysteine 101/cysteine 116, cysteine 104/cysteine 124, cysteine 126/cysteine 132, cysteine 139/cysteine 148, cysteine 142/cysteine 167, and cysteine 170/cysteine 185. An N-linked (GlcNAc...) asparagine glycan is attached at asparagine 177. A helical transmembrane segment spans residues 228–248 (LAVLLPLAFFLLLATVFSCIW). Topologically, residues 249 to 435 (KSHPSLCRKL…GPRNQFITHD (187 aa)) are cytoplasmic. Serine 323 carries the post-translational modification Phosphoserine. Pro residues predominate over residues 373–399 (PGPGDLPATPEPPYPIPEEGDPGPPGL). The interval 373-435 (PGPGDLPATP…GPRNQFITHD (63 aa)) is disordered. Over residues 403 to 417 (HQEDGKAWHLAETEH) the composition is skewed to basic and acidic residues. Residues 421 to 435 (TPSNRGPRNQFITHD) show a composition bias toward polar residues.

In terms of assembly, self-associates; dimerization and trimerization are promoted by lymphotoxin (LTA(1)-LTB(2)). Associates with TRAF3. Associates with TRAF4. Associates with TRAF5. Interacts with Aedes aegypti lymphotoxin beta receptor inhibitor; the interaction reduces dimerization and trimerization of LTBR induced by lymphotoxin (LTA(1)-LTB(2)). (Microbial infection) Interacts with HCV core protein.

It localises to the membrane. Its function is as follows. Receptor for the heterotrimeric lymphotoxin containing LTA and LTB, and for TNFS14/LIGHT. Activates NF-kappa-B signaling pathway upon stimulation with lymphotoxin (LTA(1)-LTB(2)). Promotes apoptosis via TRAF3 and TRAF5. May play a role in the development of lymphoid organs. The chain is Tumor necrosis factor receptor superfamily member 3 (LTBR) from Homo sapiens (Human).